The sequence spans 101 residues: MIPGEIKTDAGDLQLNVGCEQLTVTVANSGDRPIQVGSHYHFYEVNPALKFEREKCRGYRLDITSGTAVRFEPGQQRQVTLIAYRGKRRVFGFRASIQGDL.

It belongs to the urease beta subunit family. As to quaternary structure, heterotrimer of UreA (gamma), UreB (beta) and UreC (alpha) subunits. Three heterotrimers associate to form the active enzyme.

Its subcellular location is the cytoplasm. It carries out the reaction urea + 2 H2O + H(+) = hydrogencarbonate + 2 NH4(+). The protein operates within nitrogen metabolism; urea degradation; CO(2) and NH(3) from urea (urease route): step 1/1. This chain is Urease subunit beta, found in Psychromonas ingrahamii (strain DSM 17664 / CCUG 51855 / 37).